A 100-amino-acid chain; its full sequence is Large ribosomal subunit protein uL23 (100 aa).

The protein belongs to the universal ribosomal protein uL23 family. Part of the 50S ribosomal subunit. Contacts protein L29, and trigger factor when it is bound to the ribosome.

Its function is as follows. One of the early assembly proteins it binds 23S rRNA. One of the proteins that surrounds the polypeptide exit tunnel on the outside of the ribosome. Forms the main docking site for trigger factor binding to the ribosome. The sequence is that of Large ribosomal subunit protein uL23 from Mycolicibacterium paratuberculosis (strain ATCC BAA-968 / K-10) (Mycobacterium paratuberculosis).